A 198-amino-acid chain; its full sequence is FMN-dependent NADH:quinone oxidoreductase (198 aa).

FMN-binding positions include serine 9 and 95 to 98; that span reads MYNF.

The protein belongs to the azoreductase type 1 family. Homodimer. FMN is required as a cofactor.

It catalyses the reaction 2 a quinone + NADH + H(+) = 2 a 1,4-benzosemiquinone + NAD(+). The catalysed reaction is N,N-dimethyl-1,4-phenylenediamine + anthranilate + 2 NAD(+) = 2-(4-dimethylaminophenyl)diazenylbenzoate + 2 NADH + 2 H(+). Its function is as follows. Quinone reductase that provides resistance to thiol-specific stress caused by electrophilic quinones. Functionally, also exhibits azoreductase activity. Catalyzes the reductive cleavage of the azo bond in aromatic azo compounds to the corresponding amines. The protein is FMN-dependent NADH:quinone oxidoreductase of Alcanivorax borkumensis (strain ATCC 700651 / DSM 11573 / NCIMB 13689 / SK2).